We begin with the raw amino-acid sequence, 99 residues long: NADH dehydrogenase [ubiquinone] 1 alpha subcomplex subunit 2 (99 aa).

An N-acetylalanine modification is found at alanine 2. A disulfide bridge links cysteine 24 with cysteine 58. N6-acetyllysine; alternate is present on lysine 64. Position 64 is an N6-succinyllysine; alternate (lysine 64).

It belongs to the complex I NDUFA2 subunit family. In terms of assembly, complex I is composed of 45 different subunits.

It localises to the mitochondrion inner membrane. Accessory subunit of the mitochondrial membrane respiratory chain NADH dehydrogenase (Complex I), that is believed not to be involved in catalysis. Complex I functions in the transfer of electrons from NADH to the respiratory chain. The immediate electron acceptor for the enzyme is believed to be ubiquinone. The protein is NADH dehydrogenase [ubiquinone] 1 alpha subcomplex subunit 2 (NDUFA2) of Gorilla gorilla gorilla (Western lowland gorilla).